Here is a 375-residue protein sequence, read N- to C-terminus: Queuine tRNA-ribosyltransferase (375 aa).

The active-site Proton acceptor is Asp89. Residues 89 to 93 (DSGGF), Asp143, Gln187, and Gly214 each bind substrate. Positions 245 to 251 (GVGKPED) are RNA binding. Catalysis depends on Asp264, which acts as the Nucleophile. The tract at residues 269–273 (TRNAR) is RNA binding; important for wobble base 34 recognition. Residues Cys302, Cys304, Cys307, and His333 each contribute to the Zn(2+) site.

It belongs to the queuine tRNA-ribosyltransferase family. In terms of assembly, homodimer. Within each dimer, one monomer is responsible for RNA recognition and catalysis, while the other monomer binds to the replacement base PreQ1. Zn(2+) serves as cofactor.

The catalysed reaction is 7-aminomethyl-7-carbaguanine + guanosine(34) in tRNA = 7-aminomethyl-7-carbaguanosine(34) in tRNA + guanine. The protein operates within tRNA modification; tRNA-queuosine biosynthesis. Functionally, catalyzes the base-exchange of a guanine (G) residue with the queuine precursor 7-aminomethyl-7-deazaguanine (PreQ1) at position 34 (anticodon wobble position) in tRNAs with GU(N) anticodons (tRNA-Asp, -Asn, -His and -Tyr). Catalysis occurs through a double-displacement mechanism. The nucleophile active site attacks the C1' of nucleotide 34 to detach the guanine base from the RNA, forming a covalent enzyme-RNA intermediate. The proton acceptor active site deprotonates the incoming PreQ1, allowing a nucleophilic attack on the C1' of the ribose to form the product. After dissociation, two additional enzymatic reactions on the tRNA convert PreQ1 to queuine (Q), resulting in the hypermodified nucleoside queuosine (7-(((4,5-cis-dihydroxy-2-cyclopenten-1-yl)amino)methyl)-7-deazaguanosine). The polypeptide is Queuine tRNA-ribosyltransferase (Aliivibrio fischeri (strain ATCC 700601 / ES114) (Vibrio fischeri)).